Here is a 277-residue protein sequence, read N- to C-terminus: NLP effector protein Pc109095 (277 aa).

The N-terminal stretch at 1–19 is a signal peptide; the sequence is MKFIFAFVLCLAVAQTALG. The Hepta-peptide GHRHDWE motif signature appears at 119–125; that stretch reads RSRHLWA. N-linked (GlcNAc...) asparagine glycosylation occurs at asparagine 199.

It belongs to the Necrosis inducing protein (NPP1) family.

Its subcellular location is the secreted. Its function is as follows. Secreted effector that contributes strongly to virulence during infection by P.capsici. This Phytophthora capsici protein is NLP effector protein Pc109095.